A 328-amino-acid polypeptide reads, in one-letter code: NAD(P)H-dependent pentose reductase (328 aa).

Y50 (proton donor) is an active-site residue. Substrate is bound at residue H112. Residues 174–175 (AN), 223–232 (SSFGPQSFVE), and 279–289 (KSNNVDRLKQN) each bind NAD(+).

Belongs to the aldo/keto reductase family.

In terms of biological role, pentose reductase with a broad substrate affinity involved in pentose catabolism. Has highest reductase activities with L-arabinose and D-xylose as substrates, and displays much lower activities with D-ribose, D-galactose and D-glucose. Has highest dehydrogenase activity with L-arabitol as substrate, followed by xylitol and D-sorbitol. May be responsible for the first step of the L-arabinose catabolic pathway. This chain is NAD(P)H-dependent pentose reductase (PRD1), found in Pyricularia oryzae (strain 70-15 / ATCC MYA-4617 / FGSC 8958) (Rice blast fungus).